The following is a 272-amino-acid chain: 4-hydroxy-tetrahydrodipicolinate reductase (272 aa).

Residues 10–15 (GAGGRM), glutamate 36, 100–102 (GTT), and 124–127 (SGNM) contribute to the NAD(+) site. Histidine 157 (proton donor/acceptor) is an active-site residue. Residue histidine 158 participates in (S)-2,3,4,5-tetrahydrodipicolinate binding. The active-site Proton donor is the lysine 161. 167-168 (GT) is a (S)-2,3,4,5-tetrahydrodipicolinate binding site.

The protein belongs to the DapB family.

The protein resides in the cytoplasm. The catalysed reaction is (S)-2,3,4,5-tetrahydrodipicolinate + NAD(+) + H2O = (2S,4S)-4-hydroxy-2,3,4,5-tetrahydrodipicolinate + NADH + H(+). It catalyses the reaction (S)-2,3,4,5-tetrahydrodipicolinate + NADP(+) + H2O = (2S,4S)-4-hydroxy-2,3,4,5-tetrahydrodipicolinate + NADPH + H(+). Its pathway is amino-acid biosynthesis; L-lysine biosynthesis via DAP pathway; (S)-tetrahydrodipicolinate from L-aspartate: step 4/4. In terms of biological role, catalyzes the conversion of 4-hydroxy-tetrahydrodipicolinate (HTPA) to tetrahydrodipicolinate. The polypeptide is 4-hydroxy-tetrahydrodipicolinate reductase (Bradyrhizobium sp. (strain ORS 278)).